A 339-amino-acid chain; its full sequence is MLDDRKLDVLKAIVTDYVSSKEPVGSKALVERHGLRVSPATVRNDMAVLEEEGYITHPHTSAGRIPTDKGYRLFVDRIATLKPLSAPERRAIQAFMTGAVDLDDIVRRTVRLLAQITHQVAIMQYPVATTGTIRHLELVSLSTDRILIVLIMSSGSVEQQIVELPGHDEQSLAALRTRLNETLVGLTVAEAADSLNRFLDDLGPAEGPRAASVIATVLEILAVDPSARVVVAGVPNLTAFGAQWETAVRPVLEALEEQVVLMRLLGEATAGEAGEVTVRIGAENTDVPFQSTSLVASTYGPEDALSSLGVVGPIRMDYPSTMAAVRAVARYVGRFLAEG.

It belongs to the HrcA family.

Negative regulator of class I heat shock genes (grpE-dnaK-dnaJ and groELS operons). Prevents heat-shock induction of these operons. The chain is Heat-inducible transcription repressor HrcA from Cutibacterium acnes (strain DSM 16379 / KPA171202) (Propionibacterium acnes).